Reading from the N-terminus, the 578-residue chain is Vitelline membrane-like protein (578 aa).

A signal peptide spans 1–21 (MCGRRLLFLAAFGCLLANAFS). Positions 72–452 (QGYSAPAAPV…AAPSYSAPAS (381 aa)) are 45 X 8 AA approximate tandem repeats of [PS]-[AS]-Y-S-A-P-A-[AS]. Disordered regions lie at residues 133–442 (ASSS…YSAP) and 487–514 (SGSP…ASKS). Residues 549-578 (SLPSPPCPKNYVFSCSSVFTPAPCSQGYGY) form the VM domain.

As to quaternary structure, interacts with Vm26Aa and Vm26Ab; forms part of a disulfide-linked network within the vitelline membrane of stage 10 egg chambers. Becomes part of a disulfide-linked network including other vitelline membrane proteins, including Vm26Aa and Vm26Ab, during vitelline membrane biogenesis and maturation. In terms of processing, sulfated by pip; probably involved in embryo dorsal-ventral axis determination. Sulfation by pip may occur on covalently bound glycosaminoglycans. Secreted into the perivitelline space and becomes stably incorporated into the vitelline membrane (at protein level). Expressed throughout the follicle cell layer of stage 10 egg chambers.

It localises to the secreted. It is found in the extracellular space. The protein resides in the extracellular matrix. Functionally, major early eggshell protein secreted by folicle cells into the perivitelline space and incorporated into the vitelline membrane. Localized sulfation by pip may be involved in embryo dorsal-ventral axis determination. This is Vitelline membrane-like protein from Drosophila melanogaster (Fruit fly).